Reading from the N-terminus, the 152-residue chain is Biotin carboxyl carrier protein of acetyl-CoA carboxylase (152 aa).

Positions 72-148 (IIDILSPISG…TKNQVLMKII (77 aa)) constitute a Biotinyl-binding domain. Residue K114 is modified to N6-biotinyllysine.

It localises to the plastid. The protein localises to the chloroplast. It participates in lipid metabolism; fatty acid biosynthesis. Its function is as follows. This protein is a component of the acetyl coenzyme A carboxylase complex; first, biotin carboxylase catalyzes the carboxylation of the carrier protein and then the transcarboxylase transfers the carboxyl group to form malonyl-CoA. The protein is Biotin carboxyl carrier protein of acetyl-CoA carboxylase (accB) of Cyanidium caldarium (Red alga).